A 300-amino-acid chain; its full sequence is tRNA dimethylallyltransferase (300 aa).

ATP is bound at residue 11-18 (GPTAVGKS). Residue 13 to 18 (TAVGKS) participates in substrate binding. The tract at residues 35–38 (DSVQ) is interaction with substrate tRNA.

Belongs to the IPP transferase family. Monomer. Requires Mg(2+) as cofactor.

The enzyme catalyses adenosine(37) in tRNA + dimethylallyl diphosphate = N(6)-dimethylallyladenosine(37) in tRNA + diphosphate. Functionally, catalyzes the transfer of a dimethylallyl group onto the adenine at position 37 in tRNAs that read codons beginning with uridine, leading to the formation of N6-(dimethylallyl)adenosine (i(6)A). The chain is tRNA dimethylallyltransferase from Borrelia hermsii (strain HS1 / DAH).